Here is a 500-residue protein sequence, read N- to C-terminus: Pyridine nucleotide-disulfide oxidoreductase domain-containing protein 1 (500 aa).

Residue M1 is modified to N-acetylmethionine. Residues 211–235 (TRYTTEGRKKEARSKSKADNVGSAL) form a disordered region. Positions 213–228 (YTTEGRKKEARSKSKA) are enriched in basic and acidic residues.

This sequence belongs to the class-I pyridine nucleotide-disulfide oxidoreductase family. PYROXD1 subfamily. FAD serves as cofactor.

It localises to the nucleus. The protein localises to the cytoplasm. The protein resides in the myofibril. Its subcellular location is the sarcomere. Its function is as follows. Probable FAD-dependent oxidoreductase; involved in the cellular oxidative stress response. Required for normal sarcomere structure and muscle fiber integrity. This chain is Pyridine nucleotide-disulfide oxidoreductase domain-containing protein 1 (PYROXD1), found in Homo sapiens (Human).